The primary structure comprises 208 residues: Large ribosomal subunit protein uL3 (208 aa).

Gln149 is subject to N5-methylglutamine.

This sequence belongs to the universal ribosomal protein uL3 family. In terms of assembly, part of the 50S ribosomal subunit. Forms a cluster with proteins L14 and L19. Methylated by PrmB.

Functionally, one of the primary rRNA binding proteins, it binds directly near the 3'-end of the 23S rRNA, where it nucleates assembly of the 50S subunit. In Haemophilus influenzae (strain 86-028NP), this protein is Large ribosomal subunit protein uL3.